Consider the following 146-residue polypeptide: Globin-1 (146 aa).

A Globin domain is found at 9-146 (QLTADVKKDL…KLVAVVQAAL (138 aa)). His-101 lines the heme b pocket.

Belongs to the globin family. As to quaternary structure, homodimer.

The protein localises to the cytoplasm. This is Globin-1 from Anadara inaequivalvis (Inequivalve ark).